We begin with the raw amino-acid sequence, 72 residues long: Beta-defensin 104A (72 aa).

The first 22 residues, 1–22 (MRRLVLLLAISLLLYQDLPVRS), serve as a signal peptide directing secretion. Cystine bridges form between Cys-30-Cys-57, Cys-37-Cys-51, and Cys-41-Cys-58.

Belongs to the beta-defensin family.

Its subcellular location is the secreted. In terms of biological role, has antimicrobial activity. This is Beta-defensin 104A (DEFB104A) from Gorilla gorilla gorilla (Western lowland gorilla).